Reading from the N-terminus, the 547-residue chain is Mercuric reductase (547 aa).

The region spanning 4 to 67 (NSYKIPIQGM…NISAAGYQPG (64 aa)) is the HMA domain. Residues Cys-15 and Cys-18 each contribute to the a metal cation site. FAD is bound by residues Ala-97, Gly-117, and Thr-122. Cys-123 and Cys-128 are oxidised to a cystine. Residues Lys-132, Ala-196, Asp-388, and Val-396 each coordinate FAD. The Hg(2+) site is built by Cys-544 and Cys-545.

This sequence belongs to the class-I pyridine nucleotide-disulfide oxidoreductase family. As to quaternary structure, homodimer. FAD is required as a cofactor.

The catalysed reaction is Hg + NADP(+) + H(+) = Hg(2+) + NADPH. Resistance to Hg(2+) in bacteria appears to be governed by a specialized system which includes mercuric reductase. MerA protein is responsible for volatilizing mercury as Hg(0). This chain is Mercuric reductase (merA), found in Staphylococcus aureus.